Reading from the N-terminus, the 557-residue chain is Dihydroxy-acid dehydratase (557 aa).

Cys50 provides a ligand contact to [2Fe-2S] cluster. Asp82 contributes to the Mg(2+) binding site. Cys123 contributes to the [2Fe-2S] cluster binding site. Positions 124 and 125 each coordinate Mg(2+). Lys125 is modified (N6-carboxylysine). Position 195 (Cys195) interacts with [2Fe-2S] cluster. Residue Glu447 coordinates Mg(2+). Ser473 (proton acceptor) is an active-site residue.

Belongs to the IlvD/Edd family. As to quaternary structure, homodimer. [2Fe-2S] cluster serves as cofactor. Mg(2+) is required as a cofactor.

The enzyme catalyses (2R)-2,3-dihydroxy-3-methylbutanoate = 3-methyl-2-oxobutanoate + H2O. It catalyses the reaction (2R,3R)-2,3-dihydroxy-3-methylpentanoate = (S)-3-methyl-2-oxopentanoate + H2O. Its pathway is amino-acid biosynthesis; L-isoleucine biosynthesis; L-isoleucine from 2-oxobutanoate: step 3/4. It participates in amino-acid biosynthesis; L-valine biosynthesis; L-valine from pyruvate: step 3/4. Functions in the biosynthesis of branched-chain amino acids. Catalyzes the dehydration of (2R,3R)-2,3-dihydroxy-3-methylpentanoate (2,3-dihydroxy-3-methylvalerate) into 2-oxo-3-methylpentanoate (2-oxo-3-methylvalerate) and of (2R)-2,3-dihydroxy-3-methylbutanoate (2,3-dihydroxyisovalerate) into 2-oxo-3-methylbutanoate (2-oxoisovalerate), the penultimate precursor to L-isoleucine and L-valine, respectively. In Nitrosomonas eutropha (strain DSM 101675 / C91 / Nm57), this protein is Dihydroxy-acid dehydratase.